Reading from the N-terminus, the 387-residue chain is Protein-glutamate methylesterase/protein-glutamine glutaminase 2 (387 aa).

Positions 4 to 121 (KVLVVDDSGF…SRNPQKVKQL (118 aa)) constitute a Response regulatory domain. D55 bears the 4-aspartylphosphate mark. Residues 148–183 (AAPAAPTSSSRAPAPTTAPARAVPTRTAAPATAPAA) are compositionally biased toward low complexity. The tract at residues 148–199 (AAPAAPTSSSRAPAPTTAPARAVPTRTAAPATAPAAHAHHAPAHPTTSGTPK) is disordered. The CheB-type methylesterase domain occupies 192-384 (PTTSGTPKRK…LDDIGRHLVE (193 aa)). Catalysis depends on residues S211, H238, and D331.

Belongs to the CheB family. In terms of processing, phosphorylated by CheA. Phosphorylation of the N-terminal regulatory domain activates the methylesterase activity.

Its subcellular location is the cytoplasm. The enzyme catalyses [protein]-L-glutamate 5-O-methyl ester + H2O = L-glutamyl-[protein] + methanol + H(+). The catalysed reaction is L-glutaminyl-[protein] + H2O = L-glutamyl-[protein] + NH4(+). Its function is as follows. Involved in chemotaxis. Part of a chemotaxis signal transduction system that modulates chemotaxis in response to various stimuli. Catalyzes the demethylation of specific methylglutamate residues introduced into the chemoreceptors (methyl-accepting chemotaxis proteins or MCP) by CheR. Also mediates the irreversible deamidation of specific glutamine residues to glutamic acid. This chain is Protein-glutamate methylesterase/protein-glutamine glutaminase 2, found in Pseudomonas savastanoi pv. phaseolicola (strain 1448A / Race 6) (Pseudomonas syringae pv. phaseolicola (strain 1448A / Race 6)).